Reading from the N-terminus, the 417-residue chain is Serine hydroxymethyltransferase (417 aa).

Residues Leu121 and Gly125–Leu127 contribute to the (6S)-5,6,7,8-tetrahydrofolate site. Lys229 carries the post-translational modification N6-(pyridoxal phosphate)lysine. Position 354–356 (Ser354–Phe356) interacts with (6S)-5,6,7,8-tetrahydrofolate.

Belongs to the SHMT family. As to quaternary structure, homodimer. It depends on pyridoxal 5'-phosphate as a cofactor.

The protein localises to the cytoplasm. It catalyses the reaction (6R)-5,10-methylene-5,6,7,8-tetrahydrofolate + glycine + H2O = (6S)-5,6,7,8-tetrahydrofolate + L-serine. Its pathway is one-carbon metabolism; tetrahydrofolate interconversion. It participates in amino-acid biosynthesis; glycine biosynthesis; glycine from L-serine: step 1/1. Functionally, catalyzes the reversible interconversion of serine and glycine with tetrahydrofolate (THF) serving as the one-carbon carrier. This reaction serves as the major source of one-carbon groups required for the biosynthesis of purines, thymidylate, methionine, and other important biomolecules. Also exhibits THF-independent aldolase activity toward beta-hydroxyamino acids, producing glycine and aldehydes, via a retro-aldol mechanism. This Azotobacter vinelandii (strain DJ / ATCC BAA-1303) protein is Serine hydroxymethyltransferase.